The sequence spans 326 residues: Putative cell agglutination protein pfl9 (326 aa).

A signal peptide spans 1–21; sequence MNVVKYIIFSFALAPLLLVNA. N25 carries N-linked (GlcNAc...) asparagine glycosylation. A run of 2 repeats spans residues 103–137 and 138–175. The 2 X 36 AA approximate tandem repeats stretch occupies residues 103–175; that stretch reads STITTTITSG…GEVEVITPSC (73 aa). The region spanning 164–326 is the DIPSY domain; it reads QSGEVEVITP…RANDVTLQLY (163 aa).

The protein belongs to the mam3/map4 family.

It localises to the cell surface. Functionally, may be involved in agglutination during conjugation or other aspects of colony formation. Induces flocculation when overexpressed. This chain is Putative cell agglutination protein pfl9, found in Schizosaccharomyces pombe (strain 972 / ATCC 24843) (Fission yeast).